The sequence spans 96 residues: UPF0235 protein YggU (96 aa).

This sequence belongs to the UPF0235 family.

This is UPF0235 protein YggU from Escherichia coli (strain K12 / MC4100 / BW2952).